The chain runs to 570 residues: Glycine--tRNA ligase (570 aa).

Substrate contacts are provided by R99 and E165. ATP-binding positions include 197–199, 207–212, 324–325, and 443–446; these read RNE, LRLREF, EC, and GIDR. Substrate is bound at residue 212–216; it reads FTQAE. 439–443 contributes to the substrate binding site; that stretch reads EPSFG.

This sequence belongs to the class-II aminoacyl-tRNA synthetase family.

Its subcellular location is the cytoplasm. It carries out the reaction tRNA(Gly) + glycine + ATP = glycyl-tRNA(Gly) + AMP + diphosphate. Its function is as follows. Catalyzes the attachment of glycine to tRNA(Gly). The polypeptide is Glycine--tRNA ligase (Thermococcus kodakarensis (strain ATCC BAA-918 / JCM 12380 / KOD1) (Pyrococcus kodakaraensis (strain KOD1))).